The following is a 150-amino-acid chain: NADH-quinone oxidoreductase subunit A (150 aa).

The next 3 helical transmembrane spans lie at 14–34 (FAVF…GAFF), 66–86 (FYLV…LYAW), and 96–116 (IGFI…VYLV).

It belongs to the complex I subunit 3 family. As to quaternary structure, NDH-1 is composed of 13 different subunits. Subunits NuoA, H, J, K, L, M, N constitute the membrane sector of the complex.

The protein localises to the cell inner membrane. It carries out the reaction a quinone + NADH + 5 H(+)(in) = a quinol + NAD(+) + 4 H(+)(out). In terms of biological role, NDH-1 shuttles electrons from NADH, via FMN and iron-sulfur (Fe-S) centers, to quinones in the respiratory chain. The immediate electron acceptor for the enzyme in this species is believed to be ubiquinone. Couples the redox reaction to proton translocation (for every two electrons transferred, four hydrogen ions are translocated across the cytoplasmic membrane), and thus conserves the redox energy in a proton gradient. The polypeptide is NADH-quinone oxidoreductase subunit A (Yersinia enterocolitica serotype O:8 / biotype 1B (strain NCTC 13174 / 8081)).